The chain runs to 394 residues: MVVFSKITVVLAGLATVASAVPTGTSRKSTFTVNQKARPVAQAKAINLPGMYASALSKYGAAVPASVKAAAESGTAVTTPEANDVEYLTPVNVGGTTLNLDFDTGSADLWVFSSELSSSESTGHSLYKPSSNATKLAGYSWSITYGDQSSASGDVYKDFVVVGGVKASPQAVEAASQISQQFVNDKNNDGLLGLAFSSINTVKPKSQTTFFDTVKGQLDSPLFAVTLKHNAPGTYDFGFVDKNKYTGSLTYAQVDSSQGFWSFTADGYKIGSKSGGSIQGIADTGTTLLLLPDNVVSDYYGQVSGAQQDSSAGGYTVPCSAQLPDFTVTIGSYNAVVPGSLINYAPLQSGSSTCFGGIQSNSGLGFSIFGDIFLKSQYVVFDANGPRLGFAPQA.

The N-terminal stretch at 1-20 is a signal peptide; sequence MVVFSKITVVLAGLATVASA. Positions 21 to 71 are cleaved as a propeptide — activation peptide; it reads VPTGTSRKSTFTVNQKARPVAQAKAINLPGMYASALSKYGAAVPASVKAAA. Residues 87-391 form the Peptidase A1 domain; sequence YLTPVNVGGT…DANGPRLGFA (305 aa). Asp-103 is an active-site residue. An N-linked (GlcNAc...) asparagine glycan is attached at Asn-132. Asp-283 is an active-site residue. An intrachain disulfide couples Cys-319 to Cys-354.

This sequence belongs to the peptidase A1 family. Monomer.

It localises to the secreted. The catalysed reaction is Hydrolysis of proteins with broad specificity similar to that of pepsin A, preferring hydrophobic residues at P1 and P1', but also cleaving 20-Gly-|-Glu-21 in the B chain of insulin. Clots milk, and activates trypsinogen.. In terms of biological role, secreted aspartic endopeptidase that allows assimilation of proteinaceous substrates. The scissile peptide bond is attacked by a nucleophilic water molecule activated by two aspartic residues in the active site. Shows a broad primary substrate specificity. Favors hydrophobic residues at the P1 and P1' positions, but can also activate trypsinogen and hydrolyze the B chain of insulin between positions 'Gly-20' and 'Glu-21'. The protein is Penicillopepsin-2 of Penicillium janthinellum (Penicillium vitale).